Reading from the N-terminus, the 340-residue chain is Hyaluronan and proteoglycan link protein 2 (340 aa).

An N-terminal signal peptide occupies residues 1-26; the sequence is MPGWLTLPTLCRFLLWAFTIFHKAQG. In terms of domain architecture, Ig-like V-type spans 34–144; that stretch reads PHYLLPPIHE…EDESVALTLS (111 aa). 5 disulfide bridges follow: C57–C128, C170–C240, C194–C215, C265–C336, and C290–C311. 2 consecutive Link domains span residues 148–242 and 245–338; these read VVFP…FCFT and LAGQ…YCYA.

The protein belongs to the HAPLN family. In terms of tissue distribution, expressed only in adult brain.

It localises to the secreted. The protein resides in the extracellular space. Its subcellular location is the extracellular matrix. In terms of biological role, mediates a firm binding of versican V2 to hyaluronic acid. May play a pivotal role in the formation of the hyaluronan-associated matrix in the central nervous system (CNS) which facilitates neuronal conduction and general structural stabilization. Binds to hyaluronic acid. The chain is Hyaluronan and proteoglycan link protein 2 (HAPLN2) from Homo sapiens (Human).